A 242-amino-acid chain; its full sequence is Ubiquinone biosynthesis O-methyltransferase (242 aa).

The S-adenosyl-L-methionine site is built by Arg44, Gly64, Asp85, and Met129.

The protein belongs to the methyltransferase superfamily. UbiG/COQ3 family.

The catalysed reaction is a 3-demethylubiquinol + S-adenosyl-L-methionine = a ubiquinol + S-adenosyl-L-homocysteine + H(+). It catalyses the reaction a 3-(all-trans-polyprenyl)benzene-1,2-diol + S-adenosyl-L-methionine = a 2-methoxy-6-(all-trans-polyprenyl)phenol + S-adenosyl-L-homocysteine + H(+). It functions in the pathway cofactor biosynthesis; ubiquinone biosynthesis. Its function is as follows. O-methyltransferase that catalyzes the 2 O-methylation steps in the ubiquinone biosynthetic pathway. This chain is Ubiquinone biosynthesis O-methyltransferase, found in Yersinia pseudotuberculosis serotype O:1b (strain IP 31758).